The sequence spans 600 residues: Keratin, type II cuticular Hb4 (600 aa).

Residues 1–165 (MSCRSYRVSS…PNAQRVKKDE (165 aa)) are head. The region spanning 165–476 (EKEQIKTLNN…RLLEGEESRL (312 aa)) is the IF rod domain. Residues 166-200 (KEQIKTLNNKFASFIDKVRFLEQQNKLLETKWSFL) are coil 1A. The interval 201 to 210 (QEQKCIRSNL) is linker 1. A coil 1B region spans residues 211–311 (EPLFESYITN…YMEEIQLLQS (101 aa)). Residues 312–328 (HISETSVIVKMDNSRDL) are linker 12. Positions 329-472 (NLDGIIAEVK…ATYRRLLEGE (144 aa)) are coil 2. Positions 473-600 (ESRLCEGVGP…STTTSCRTKY (128 aa)) are tail.

This sequence belongs to the intermediate filament family. In terms of assembly, heterotetramer of two type I and two type II keratins. Expressed in the hair follicles.

This Homo sapiens (Human) protein is Keratin, type II cuticular Hb4 (KRT84).